The chain runs to 223 residues: Transcriptional regulatory protein HprR (223 aa).

The 114-residue stretch at 2–115 (KILLIEDNQR…ELLARVRAQL (114 aa)) folds into the Response regulatory domain. Asp51 is modified (4-aspartylphosphate). Positions 122 to 220 (NSTLEISGLR…IRGMGYSFVA (99 aa)) form a DNA-binding region, ompR/PhoB-type.

Post-translationally, phosphorylated by HprS.

It localises to the cytoplasm. Its function is as follows. Member of a two-component regulatory system HprR/HprS involved in response to hydrogen peroxide. Regulates the expression of at least 5 operons, cyoABCDE, hprRS, hiuH, cusRS and cusCFBA. Bifunctional regulator that acts as an activator and a repressor. In Escherichia coli (strain K12), this protein is Transcriptional regulatory protein HprR.